The primary structure comprises 491 residues: UDP-N-acetylmuramate--L-alanine ligase (491 aa).

126–132 (GTHGKTT) contacts ATP.

It belongs to the MurCDEF family.

Its subcellular location is the cytoplasm. It catalyses the reaction UDP-N-acetyl-alpha-D-muramate + L-alanine + ATP = UDP-N-acetyl-alpha-D-muramoyl-L-alanine + ADP + phosphate + H(+). It participates in cell wall biogenesis; peptidoglycan biosynthesis. Its function is as follows. Cell wall formation. The chain is UDP-N-acetylmuramate--L-alanine ligase from Shigella flexneri.